The chain runs to 191 residues: MGLEAVLEEIREKGRKEADAIRAESKMDSDRILAEADQKVAGIKAEAEEASTKQAARVTAQEISAANLLVKREILNTQKGLLDEVYEGTIAEIAKLPESFHREAIKKLLTEAKKEIPKGKIHCNARDEAAAKAVLAEKEFSGFILGEPAHIDGGILIEGEGGELQIDYSYRTFMNKVWESGLKDASDILFG.

Belongs to the V-ATPase E subunit family. Has multiple subunits with at least A(3), B(3), C, D, E, F, H, I and proteolipid K(x).

It localises to the cell membrane. In terms of biological role, component of the A-type ATP synthase that produces ATP from ADP in the presence of a proton gradient across the membrane. The sequence is that of A-type ATP synthase subunit E from Methanoregula boonei (strain DSM 21154 / JCM 14090 / 6A8).